The chain runs to 611 residues: Probable potassium transport system protein Kup (611 aa).

The next 13 membrane-spanning stretches (helical) occupy residues 24–44 (LVFG…FLFL), 55–75 (VSLI…FLAM), 102–122 (VAVF…ECVI), 143–163 (LIAQ…LFLF), 175–195 (FGPV…ISVA), 218–238 (LLGF…EALF), 252–272 (AWGF…AYLL), 275–295 (TDVI…LYIP), 296–316 (FLLL…SGIF), 344–364 (IYIN…LLIF), 374–394 (YGLA…AIFL), 400–420 (LYMG…LSTV), and 423–443 (ITHG…IVII).

The protein belongs to the HAK/KUP transporter (TC 2.A.72) family.

The protein localises to the cell membrane. The catalysed reaction is K(+)(in) + H(+)(in) = K(+)(out) + H(+)(out). In terms of biological role, transport of potassium into the cell. Likely operates as a K(+):H(+) symporter. The protein is Probable potassium transport system protein Kup of Methanospirillum hungatei JF-1 (strain ATCC 27890 / DSM 864 / NBRC 100397 / JF-1).